A 443-amino-acid chain; its full sequence is ATP-dependent protease ATPase subunit HslU (443 aa).

Residues I18, 60-65 (GVGKTE), D256, E321, and R393 each bind ATP.

The protein belongs to the ClpX chaperone family. HslU subfamily. As to quaternary structure, a double ring-shaped homohexamer of HslV is capped on each side by a ring-shaped HslU homohexamer. The assembly of the HslU/HslV complex is dependent on binding of ATP.

The protein localises to the cytoplasm. ATPase subunit of a proteasome-like degradation complex; this subunit has chaperone activity. The binding of ATP and its subsequent hydrolysis by HslU are essential for unfolding of protein substrates subsequently hydrolyzed by HslV. HslU recognizes the N-terminal part of its protein substrates and unfolds these before they are guided to HslV for hydrolysis. The protein is ATP-dependent protease ATPase subunit HslU of Buchnera aphidicola subsp. Acyrthosiphon pisum (strain APS) (Acyrthosiphon pisum symbiotic bacterium).